We begin with the raw amino-acid sequence, 247 residues long: Protein eak-4 (247 aa).

G2 carries N-myristoyl glycine lipidation.

As to expression, expressed in the 2 embryonic head hypodermal cells XXXL/R.

It is found in the cell membrane. Functionally, together with eak-6 and sdf-9, negatively regulates dauer larva formation downstream of the insulin-like receptor daf-2 and in parallel with age-1, pdk-1 and akt-1. This chain is Protein eak-4, found in Caenorhabditis elegans.